The sequence spans 749 residues: MEKSAAGDNIDKYSPSSIPDYDTEFLNPDDLRAFEKALTDQDADPLVALNDWRPVYQRVVRRGRGRRKSAAAAPRRTKDETREGVLYTVLKWPFLLFVLGWITFLSVGYALTRIYIFLYEQWVTWRGKRESLRRELYKHENYDDWLHAAQALDEYLGNQRWKKIDEYAYYDHLTIRKLGRQLRTVRMQVEEEMKRGESGSTVVVEELCNLLEACVKANFAGVENPRLYSEAYSGTKDLVQDYIDEVHACVKVITDSRQARNEEKYSHFKHLDTNFGRTALCLSGGATFAYYHFGVVRALLDNEVLPSIITGTSGGALVAALVGTRTDDELKQLLVPALAHKIKACSEGFTTWARRWWRTGARFDTMDWARQCSWFCRGSTTFREAYERTGRILNVSCVPSDPHSPTILANYLTSPNCVIWSAVLASAAVPGILNPVVLMTKKRDGTLAPYSFGHKWKDGSLRTDIPIKALNLHFNVNFTIVSQVNPHINLFFFSSRGAVGRPVTHRKGRGWRGGFLGSAIEQYIKLDLNKWLKVLRHLELLPRPLGQDWSEIWLQKFSGTVTIWPKTVPSDFYHILSDPSPERLARMLRTGQQSTFPKIQFIKNRLKIEYAILEGLHRFSADGESVGATSIQPFPFDNGAAGADQKSNDPREERLNRNFPERSSEYSYDYVKSFSDFSDDPIVSAENSSVDDNYIVPSRQRDAGAEAGVGTGTAERRGSFSSLFNLEEMRRQSAVFFDDPDLYRDGGDL.

A compositionally biased stretch (basic and acidic residues) spans 1-11; it reads MEKSAAGDNID. The tract at residues 1-21 is disordered; that stretch reads MEKSAAGDNIDKYSPSSIPDY. The helical transmembrane segment at 92 to 112 threads the bilayer; the sequence is WPFLLFVLGWITFLSVGYALT. One can recognise a PNPLA domain in the interval 280-471; sequence LCLSGGATFA…RTDIPIKALN (192 aa). Positions 311 to 315 match the GXSXG motif; the sequence is GTSGG. Serine 313 serves as the catalytic Nucleophile. Aspartate 458 acts as the Proton acceptor in catalysis. Residues 630-659 are disordered; it reads SIQPFPFDNGAAGADQKSNDPREERLNRNF. A compositionally biased stretch (basic and acidic residues) spans 646 to 659; that stretch reads KSNDPREERLNRNF.

It belongs to the PLPL family.

Its subcellular location is the membrane. Its function is as follows. Probable lipid hydrolase. In Emericella nidulans (strain FGSC A4 / ATCC 38163 / CBS 112.46 / NRRL 194 / M139) (Aspergillus nidulans), this protein is Patatin-like phospholipase domain-containing protein AN0408.